Here is a 69-residue protein sequence, read N- to C-terminus: Putative membrane protein insertion efficiency factor (69 aa).

It belongs to the UPF0161 family.

Its subcellular location is the cell membrane. In terms of biological role, could be involved in insertion of integral membrane proteins into the membrane. This Clostridium botulinum (strain Kyoto / Type A2) protein is Putative membrane protein insertion efficiency factor.